Consider the following 428-residue polypeptide: MRKYQARIISIILAMIFIMFWDYLFYFIGKNPINWPVDIVYTAVTLVSVWMLAYYIDEKQQLVKKMKDNEWKYKQLSEEKNRIMDNLQEIVFQTNAKGEITYLNQAWASITGFSISECMGTMYNDYFIKEKHVADHINTQIQNKASSGMFTAKYVTKNGTIFWGEVHYKLYYDRDDQFTGSLGTMSDITERKEAEDELIEINERLARESQKLSITSELAAGIAHEVRNPLTSVSGFLQIMKTQYPDRKDYFDIIFSEIKRIDLVLSELLLLAKPQAITFKTHQLNEILKQVTTLLDTNAILSNIVIEKNFKETDGCMINGDENQLKQVFINIIKNGIEAMPKGGVVTISTAKTASHAVISVKDEGNGMPQEKLKQIGKPFYSTKEKGTGLGLPICLRILKEHDGELKIESEAGKGSVFQVVLPLKSDS.

2 helical membrane passes run 8-28 (IISI…FYFI) and 36-56 (PVDI…AYYI). The PAS domain maps to 76-147 (LSEEKNRIMD…NTQIQNKASS (72 aa)). The PAC domain occupies 148-200 (GMFTAKYVTKNGTIFWGEVHYKLYYDRDDQFTGSLGTMSDITERKEAEDELIE). A Histidine kinase domain is found at 221 to 426 (GIAHEVRNPL…VFQVVLPLKS (206 aa)). His-224 bears the Phosphohistidine; by autocatalysis mark.

Oligomerizes, probably forms homodimers; oligomerization is assisted by FloT. Interacts with FloT. Another study shows only rare colocalization with FloT or FloA membrane assemblies. KinC membrane assemblies are more mobile than FloT membrane assemblies.

It is found in the cell membrane. Its subcellular location is the membrane raft. It catalyses the reaction ATP + protein L-histidine = ADP + protein N-phospho-L-histidine.. In terms of biological role, phosphorylates the sporulation-regulatory protein Spo0A a transcription factor that also controls biofilm formation. Requires FloT and FloA for localization to DRMs and for activity. The chain is Sporulation kinase C from Bacillus subtilis (strain 168).